Here is a 355-residue protein sequence, read N- to C-terminus: Beta-ketoacyl-[acyl-carrier-protein] synthase III (355 aa).

Catalysis depends on residues Cys-122 and His-280. Positions 281 to 285 are ACP-binding; sequence QANMR. Asn-311 is an active-site residue.

The protein belongs to the thiolase-like superfamily. FabH family. As to quaternary structure, homodimer.

It is found in the cytoplasm. The catalysed reaction is malonyl-[ACP] + acetyl-CoA + H(+) = 3-oxobutanoyl-[ACP] + CO2 + CoA. The protein operates within lipid metabolism; fatty acid biosynthesis. Catalyzes the condensation reaction of fatty acid synthesis by the addition to an acyl acceptor of two carbons from malonyl-ACP. Catalyzes the first condensation reaction which initiates fatty acid synthesis and may therefore play a role in governing the total rate of fatty acid production. Possesses both acetoacetyl-ACP synthase and acetyl transacylase activities. Its substrate specificity determines the biosynthesis of branched-chain and/or straight-chain of fatty acids. In Kocuria rhizophila (strain ATCC 9341 / DSM 348 / NBRC 103217 / DC2201), this protein is Beta-ketoacyl-[acyl-carrier-protein] synthase III.